The sequence spans 226 residues: 2-C-methyl-D-erythritol 4-phosphate cytidylyltransferase (226 aa).

Belongs to the IspD/TarI cytidylyltransferase family. IspD subfamily.

The catalysed reaction is 2-C-methyl-D-erythritol 4-phosphate + CTP + H(+) = 4-CDP-2-C-methyl-D-erythritol + diphosphate. Its pathway is isoprenoid biosynthesis; isopentenyl diphosphate biosynthesis via DXP pathway; isopentenyl diphosphate from 1-deoxy-D-xylulose 5-phosphate: step 2/6. Functionally, catalyzes the formation of 4-diphosphocytidyl-2-C-methyl-D-erythritol from CTP and 2-C-methyl-D-erythritol 4-phosphate (MEP). The polypeptide is 2-C-methyl-D-erythritol 4-phosphate cytidylyltransferase (Prochlorococcus marinus (strain SARG / CCMP1375 / SS120)).